Consider the following 176-residue polypeptide: NAD(P)H-quinone oxidoreductase subunit J (176 aa).

Belongs to the complex I 30 kDa subunit family. As to quaternary structure, NDH-1 can be composed of about 15 different subunits; different subcomplexes with different compositions have been identified which probably have different functions.

The protein resides in the cellular thylakoid membrane. The enzyme catalyses a plastoquinone + NADH + (n+1) H(+)(in) = a plastoquinol + NAD(+) + n H(+)(out). The catalysed reaction is a plastoquinone + NADPH + (n+1) H(+)(in) = a plastoquinol + NADP(+) + n H(+)(out). Functionally, NDH-1 shuttles electrons from an unknown electron donor, via FMN and iron-sulfur (Fe-S) centers, to quinones in the respiratory and/or the photosynthetic chain. The immediate electron acceptor for the enzyme in this species is believed to be plastoquinone. Couples the redox reaction to proton translocation, and thus conserves the redox energy in a proton gradient. Cyanobacterial NDH-1 also plays a role in inorganic carbon-concentration. This is NAD(P)H-quinone oxidoreductase subunit J from Prochlorococcus marinus subsp. pastoris (strain CCMP1986 / NIES-2087 / MED4).